The chain runs to 1468 residues: DNA polymerase alpha catalytic subunit A (1468 aa).

Positions 1–12 are enriched in basic and acidic residues; sequence MSSKSEKLEKLR. 3 disordered regions span residues 1-34, 71-135, and 166-205; these read MSSK…SDGD, GVEE…KKSI, and NLNS…PDSS. Position 2 is an N-acetylserine (Ser2). Phosphoserine is present on Ser31. Over residues 71-80 the composition is skewed to basic and acidic residues; the sequence is GVEEDWREVD. A phosphoserine mark is found at Ser82, Ser83, Ser84, Ser169, and Ser170. Polar residues predominate over residues 166-176; the sequence is NLNSSPTSEFK. Thr172 bears the Phosphothreonine mark. Basic and acidic residues predominate over residues 183-205; sequence NGNDESSHDAGISKKVKIDPDSS. Ser240 and Ser274 each carry phosphoserine. The disordered stretch occupies residues 256–275; sequence LANPPSAQSLADEEDDEDSD. Residues 266 to 275 are compositionally biased toward acidic residues; that stretch reads ADEEDDEDSD. Residues Thr309 and Thr313 each carry the phosphothreonine modification. Residues 813 to 837 form a disordered region; the sequence is PDKEGNRSRAQKQRQNEENADAPVN. The tract at residues 1246–1381 is DNA-binding; that stretch reads KKYFRREGGN…CTGVMRYKYS (136 aa). The Zn(2+) site is built by Cys1287, Cys1290, Cys1314, Cys1317, Cys1348, Cys1353, Cys1367, and Cys1372. The CysA-type zinc finger occupies 1287 to 1317; that stretch reads CPSCDKRFPFGGIVSSNYYRVSYNGLQCKHC. Positions 1348–1372 match the CysB motif motif; that stretch reads CDDSTCGIVTRQVSVFGKRCLNDGC.

The protein belongs to the DNA polymerase type-B family. DNA polymerase alpha:primase is a four subunit enzyme complex, which is assembled throughout the cell cycle, and consists of the two DNA polymerase subunits A POL1 and B POL12, and the DNA primase large PRI2 and small PRI1 subunits. Subunit B POL12 binds to subunit A POL1. POL1 interacts with CDC13, POB3, SPT16 and MCM10.

The protein localises to the nucleus. The enzyme catalyses DNA(n) + a 2'-deoxyribonucleoside 5'-triphosphate = DNA(n+1) + diphosphate. Its function is as follows. Catalytic component of DNA polymerase alpha, which in complex with DNA primase (DNA polymerase alpha:primase) constitutes a replicative polymerase. POL1 has a role in promoting telomere replication during interaction with CDC13. The protein is DNA polymerase alpha catalytic subunit A (POL1) of Saccharomyces cerevisiae (strain ATCC 204508 / S288c) (Baker's yeast).